The sequence spans 345 residues: Mitochondrial metalloendopeptidase OMA1 (345 aa).

The Mitochondrial matrix segment spans residues methionine 1–tyrosine 67. The helical transmembrane segment at leucine 68–valine 88 threads the bilayer. The Mitochondrial intermembrane segment spans residues serine 89 to methionine 345. Histidine 203 contributes to the Zn(2+) binding site. Residue glutamate 204 is part of the active site. Positions 207 and 257 each coordinate Zn(2+). Cysteine 272 and cysteine 332 form a disulfide bridge. The segment at glutamate 314 to methionine 345 is required for protease activation.

It belongs to the peptidase M48 family. In terms of assembly, homooligomer. Zn(2+) is required as a cofactor. Forms a redox-dependent disulfide bond, which plays a structural role and regulates its conformational stability and activity.

It is found in the mitochondrion inner membrane. Protease activity is induced in response to various mitochondrial stress, such as changes in membrane potential, oxidative stress or chronic hyperpolarization, and depends on its C-terminal region. Protease that is part of the quality control system in the inner membrane of mitochondria. Activated in response to various mitochondrial stress, leading to the proteolytic cleavage of target proteins, such as OXA1 and COX1. Cleaves and thereby promotes the turnover of mistranslated or misfolded membrane proteins. Cleaves the misfolded multi-pass membrane protein OXA1. Involved in quality control of cytochrome oxidase assembly: mediates the cleavage of COX1 in cells lacking COA2. Required for the stability of the respiratory supercomplexes. Required for TOR signaling. The sequence is that of Mitochondrial metalloendopeptidase OMA1 from Saccharomyces cerevisiae (strain ATCC 204508 / S288c) (Baker's yeast).